We begin with the raw amino-acid sequence, 211 residues long: 3-demethoxyubiquinol 3-hydroxylase (211 aa).

Fe cation contacts are provided by Glu-60, Glu-90, His-93, Glu-142, Glu-174, and His-177.

It belongs to the COQ7 family. The cofactor is Fe cation.

The protein resides in the cell membrane. The catalysed reaction is a 5-methoxy-2-methyl-3-(all-trans-polyprenyl)benzene-1,4-diol + AH2 + O2 = a 3-demethylubiquinol + A + H2O. It functions in the pathway cofactor biosynthesis; ubiquinone biosynthesis. Its function is as follows. Catalyzes the hydroxylation of 2-nonaprenyl-3-methyl-6-methoxy-1,4-benzoquinol during ubiquinone biosynthesis. The polypeptide is 3-demethoxyubiquinol 3-hydroxylase (Acinetobacter baylyi (strain ATCC 33305 / BD413 / ADP1)).